We begin with the raw amino-acid sequence, 793 residues long: Ankyrin repeat domain-containing protein SOWAHB (793 aa).

Disordered regions lie at residues 83-185 (EEGL…QARA), 219-290 (ATAE…ELLT), 337-360 (QLPL…SSHS), and 396-543 (DFVD…SPRV). Composition is skewed to low complexity over residues 96-108 (APSA…CSPR), 134-144 (AGAAARAADAA), and 175-185 (AAAAAGAQARA). Serine 106 carries the phosphoserine modification. A compositionally biased stretch (basic and acidic residues) spans 220–244 (TAEEKPARALPAQDDRGASREREEG). The span at 246–273 (LAEPAPVPAVAHSPPATVEAATSRASPP) shows a compositional bias: low complexity. Serine 271 is modified (phosphoserine). Acidic residues predominate over residues 396-406 (DFVDQESDGSE). Low complexity-rich tracts occupy residues 407–417 (ESSSGPKDSPG) and 498–508 (RSSLAGRAKLS). Basic residues predominate over residues 521-533 (KRSRRPPRSRKPS). ANK repeat units follow at residues 630–659 (TGYT…KAGI) and 669–699 (CGYT…RVNV). Residue serine 761 is modified to Phosphoserine.

It belongs to the SOWAH family.

The polypeptide is Ankyrin repeat domain-containing protein SOWAHB (SOWAHB) (Homo sapiens (Human)).